The primary structure comprises 117 residues: uncharacterized protein (117 aa).

The protein to H.influenzae HI_1162 and to HI_0925.

This is an uncharacterized protein from Escherichia coli (strain K12).